The sequence spans 199 residues: GTP cyclohydrolase-2 (199 aa).

52 to 56 lines the GTP pocket; the sequence is RMHSE. Residues Cys-57, Cys-68, and Cys-70 each contribute to the Zn(2+) site. Residues Gln-73, 94–96, and Thr-116 contribute to the GTP site; that span reads EGR. Asp-128 functions as the Proton acceptor in the catalytic mechanism. Arg-130 (nucleophile) is an active-site residue. 2 residues coordinate GTP: Thr-151 and Lys-156.

It belongs to the GTP cyclohydrolase II family. Requires Zn(2+) as cofactor.

The enzyme catalyses GTP + 4 H2O = 2,5-diamino-6-hydroxy-4-(5-phosphoribosylamino)-pyrimidine + formate + 2 phosphate + 3 H(+). The protein operates within cofactor biosynthesis; riboflavin biosynthesis; 5-amino-6-(D-ribitylamino)uracil from GTP: step 1/4. In terms of biological role, catalyzes the conversion of GTP to 2,5-diamino-6-ribosylamino-4(3H)-pyrimidinone 5'-phosphate (DARP), formate and pyrophosphate. This is GTP cyclohydrolase-2 from Aliivibrio fischeri (strain ATCC 700601 / ES114) (Vibrio fischeri).